Here is a 201-residue protein sequence, read N- to C-terminus: Small ribosomal subunit protein uS4 (201 aa).

The interval 22-47 (TGKELARRPYAPGDHGNDRRGKLSEY) is disordered. The region spanning 93–153 (RRLDNMVYRL…EKSKNLDVIK (61 aa)) is the S4 RNA-binding domain.

Belongs to the universal ribosomal protein uS4 family. In terms of assembly, part of the 30S ribosomal subunit. Contacts protein S5. The interaction surface between S4 and S5 is involved in control of translational fidelity.

Its function is as follows. One of the primary rRNA binding proteins, it binds directly to 16S rRNA where it nucleates assembly of the body of the 30S subunit. Functionally, with S5 and S12 plays an important role in translational accuracy. In Limosilactobacillus fermentum (strain NBRC 3956 / LMG 18251) (Lactobacillus fermentum), this protein is Small ribosomal subunit protein uS4.